The chain runs to 236 residues: uncharacterized protein (236 aa).

Residues Gly15 to Phe34 traverse the membrane as a helical segment. Residues Lys36–Ala71 adopt a coiled-coil conformation. Disordered regions lie at residues Ser83–Lys113 and Ala185–Glu236. Polar residues-rich tracts occupy residues Gln93–Gly102 and Ala185–Pro195. Residues Ala225–Glu236 are compositionally biased toward basic and acidic residues.

Its subcellular location is the membrane. This is an uncharacterized protein from Aedes vexans (Inland floodwater mosquito).